The primary structure comprises 2500 residues: Non-reducing polyketide synthase atr1 (2500 aa).

Positions valine 13 to leucine 260 are N-terminal acylcarrier protein transacylase domain (SAT). A Ketosynthase family 3 (KS3) domain is found at threonine 385–glutamine 808. Catalysis depends on for beta-ketoacyl synthase activity residues cysteine 557, histidine 692, and histidine 731. Residues methionine 908 to aspartate 1199 form a malonyl-CoA:ACP transacylase (MAT) domain region. Serine 995 (for acyl/malonyl transferase activity) is an active-site residue. The tract at residues proline 1286–glutamine 1413 is N-terminal hotdog fold. The PKS/mFAS DH domain occupies proline 1286–glutamate 1584. The tract at residues arginine 1287–leucine 1583 is product template (PT) domain. The active-site Proton acceptor; for dehydratase activity is the histidine 1317. The tract at residues serine 1433 to glutamate 1584 is C-terminal hotdog fold. Aspartate 1495 functions as the Proton donor; for dehydratase activity in the catalytic mechanism. Residues alanine 1594–asparagine 1649 are disordered. Residues serine 1602 to threonine 1617 show a composition bias toward low complexity. Residues asparagine 1649–lysine 1725 enclose the Carrier domain. Serine 1683 carries the O-(pantetheine 4'-phosphoryl)serine modification. Residues lysine 2164–arginine 2496 are thioesterase (TE) domain. Residues serine 2285 and aspartate 2434 each act as for thioesterase activity in the active site.

It carries out the reaction 6 malonyl-CoA + 2 acetyl-CoA + 2 S-adenosyl-L-methionine + 3 H(+) = 4-O-demethylbarbatate + 2 S-adenosyl-L-homocysteine + 6 CO2 + 8 CoA + H2O. Its pathway is secondary metabolite biosynthesis; terpenoid biosynthesis. In terms of biological role, non-reducing polyketide synthase; part of the gene cluster that mediates the biosynthesis of atranorin, a depside of polyketide origin that accumulates in the cortical or medullary layers of lichen thalli. The first step in the pathway is performed by the non-reducing polyketide synthase atr1 that produces 4-O-demethylbarbatic acid composed of two 3-methylorsellinic acid (3MOA) moieties from S-adenosyl-L-methionine (SAM), acetyl-CoA and malonyl-CoA units. The pathway continues with the actions of the cytochrome P450 monooygenase atr2 that catalizes the oxidation of c-9 and the O-methyltransferase atr3 that performs the methylation of the carboxyl group to yield atranorin, via the proatranorin II and III intermediates if atr2 acts first, or the proatranorin I intermediate if atr3 acts first. The sequence is that of Non-reducing polyketide synthase atr1 from Stereocaulon alpinum (Alpine snow lichen).